The following is a 317-amino-acid chain: Transaldolase (317 aa).

Residue K132 is the Schiff-base intermediate with substrate of the active site.

The protein belongs to the transaldolase family. Type 1 subfamily. As to quaternary structure, homodimer.

It is found in the cytoplasm. It carries out the reaction D-sedoheptulose 7-phosphate + D-glyceraldehyde 3-phosphate = D-erythrose 4-phosphate + beta-D-fructose 6-phosphate. The protein operates within carbohydrate degradation; pentose phosphate pathway; D-glyceraldehyde 3-phosphate and beta-D-fructose 6-phosphate from D-ribose 5-phosphate and D-xylulose 5-phosphate (non-oxidative stage): step 2/3. Functionally, transaldolase is important for the balance of metabolites in the pentose-phosphate pathway. The polypeptide is Transaldolase (Shewanella denitrificans (strain OS217 / ATCC BAA-1090 / DSM 15013)).